Here is a 109-residue protein sequence, read N- to C-terminus: Hainantoxin-XVIII-7 (109 aa).

Residues 1–18 form the signal peptide; that stretch reads MKLSIIIIATSLVIAVVA. Residues 19–46 constitute a propeptide that is removed on maturation; that stretch reads FPSKDSKAIENDKTEQRMEIVVQETARA. 4 cysteine pairs are disulfide-bonded: Cys-47–Cys-62, Cys-55–Cys-68, Cys-59–Cys-108, and Cys-61–Cys-81.

The protein belongs to the neurotoxin 25 family. F7 subfamily. In terms of tissue distribution, expressed by the venom gland.

The protein resides in the secreted. In terms of biological role, putative ion channel inhibitor. The protein is Hainantoxin-XVIII-7 of Cyriopagopus hainanus (Chinese bird spider).